An 86-amino-acid chain; its full sequence is Toxin To8 (86 aa).

Positions 1–20 (MTRFVLFISCFFLIGMVVEC) are cleaved as a signal peptide. The LCN-type CS-alpha/beta domain occupies 21–83 (KEGYLLGSRG…LWESDTNECG (63 aa)). 4 disulfide bridges follow: Cys-31-Cys-82, Cys-35-Cys-57, Cys-43-Cys-63, and Cys-47-Cys-65. Cys-82 bears the Cysteine amide mark.

Belongs to the long (4 C-C) scorpion toxin superfamily. Sodium channel inhibitor family. Beta subfamily. As to expression, expressed by the venom gland.

The protein resides in the secreted. Its function is as follows. Beta toxins bind voltage-independently at site-4 of sodium channels (Nav) and shift the voltage of activation toward more negative potentials thereby affecting sodium channel activation and promoting spontaneous and repetitive firing. This Tityus obscurus (Amazonian scorpion) protein is Toxin To8.